The sequence spans 158 residues: Male-specific protein scotti (158 aa).

A disordered region spans residues 24 to 43 (NVPDGNGDGDGDGDGDGNDA). Positions 30 to 42 (GDGDGDGDGDGND) are enriched in acidic residues.

This sequence belongs to the male-specific scotti family.

Its function is as follows. Post-meiotically transcribed gene that has a role in late spermiogenesis; required for actin cone progression during spermatid individualization. This Drosophila virilis (Fruit fly) protein is Male-specific protein scotti.